The primary structure comprises 79 residues: Putative membrane protein insertion efficiency factor (79 aa).

It belongs to the UPF0161 family.

The protein localises to the cell inner membrane. Could be involved in insertion of integral membrane proteins into the membrane. The sequence is that of Putative membrane protein insertion efficiency factor from Cytophaga hutchinsonii (strain ATCC 33406 / DSM 1761 / CIP 103989 / NBRC 15051 / NCIMB 9469 / D465).